A 97-amino-acid polypeptide reads, in one-letter code: Aspartyl/glutamyl-tRNA(Asn/Gln) amidotransferase subunit C (97 aa).

The disordered stretch occupies residues 59–78; it reads STGKLRPDEPAQPLSRDDAL. The segment covering 63 to 78 has biased composition (basic and acidic residues); it reads LRPDEPAQPLSRDDAL.

It belongs to the GatC family. As to quaternary structure, heterotrimer of A, B and C subunits.

The enzyme catalyses L-glutamyl-tRNA(Gln) + L-glutamine + ATP + H2O = L-glutaminyl-tRNA(Gln) + L-glutamate + ADP + phosphate + H(+). It catalyses the reaction L-aspartyl-tRNA(Asn) + L-glutamine + ATP + H2O = L-asparaginyl-tRNA(Asn) + L-glutamate + ADP + phosphate + 2 H(+). Its function is as follows. Allows the formation of correctly charged Asn-tRNA(Asn) or Gln-tRNA(Gln) through the transamidation of misacylated Asp-tRNA(Asn) or Glu-tRNA(Gln) in organisms which lack either or both of asparaginyl-tRNA or glutaminyl-tRNA synthetases. The reaction takes place in the presence of glutamine and ATP through an activated phospho-Asp-tRNA(Asn) or phospho-Glu-tRNA(Gln). The polypeptide is Aspartyl/glutamyl-tRNA(Asn/Gln) amidotransferase subunit C (Metallosphaera sedula (strain ATCC 51363 / DSM 5348 / JCM 9185 / NBRC 15509 / TH2)).